A 323-amino-acid chain; its full sequence is GTP 3',8-cyclase (323 aa).

The region spanning 5-228 is the Radical SAM core domain; that stretch reads GFGRKVDYLR…TVLRDTSSPA (224 aa). Arg-14 contributes to the GTP binding site. Residues Cys-21 and Cys-25 each coordinate [4Fe-4S] cluster. Tyr-27 contributes to the S-adenosyl-L-methionine binding site. Cys-28 provides a ligand contact to [4Fe-4S] cluster. Position 64 (Arg-64) interacts with GTP. Residue Gly-68 participates in S-adenosyl-L-methionine binding. Thr-95 provides a ligand contact to GTP. Position 119 (Ser-119) interacts with S-adenosyl-L-methionine. Lys-155 contributes to the GTP binding site. Met-189 contacts S-adenosyl-L-methionine. [4Fe-4S] cluster-binding residues include Cys-250 and Cys-253. Position 255 to 257 (255 to 257) interacts with GTP; sequence RIR. Position 267 (Cys-267) interacts with [4Fe-4S] cluster. Positions 302 to 313 are enriched in basic and acidic residues; sequence KNKWSQKDDNEV. A disordered region spans residues 302 to 323; it reads KNKWSQKDDNEVSTRAFYQTGG.

This sequence belongs to the radical SAM superfamily. MoaA family. Monomer and homodimer. The cofactor is [4Fe-4S] cluster.

The enzyme catalyses GTP + AH2 + S-adenosyl-L-methionine = (8S)-3',8-cyclo-7,8-dihydroguanosine 5'-triphosphate + 5'-deoxyadenosine + L-methionine + A + H(+). Its pathway is cofactor biosynthesis; molybdopterin biosynthesis. Its function is as follows. Catalyzes the cyclization of GTP to (8S)-3',8-cyclo-7,8-dihydroguanosine 5'-triphosphate. The protein is GTP 3',8-cyclase of Aliarcobacter butzleri (strain RM4018) (Arcobacter butzleri).